Consider the following 279-residue polypeptide: Fructose-1,6-bisphosphatase class 1 (279 aa).

Glu65, Asp85, Leu87, and Asp88 together coordinate Mg(2+). Residues 88–91, Tyr190, and Lys221 contribute to the substrate site; that span reads DGSS. Residue Glu227 participates in Mg(2+) binding.

The protein belongs to the FBPase class 1 family. In terms of assembly, homotetramer. The cofactor is Mg(2+).

It is found in the cytoplasm. It catalyses the reaction beta-D-fructose 1,6-bisphosphate + H2O = beta-D-fructose 6-phosphate + phosphate. Its pathway is carbohydrate biosynthesis; gluconeogenesis. The polypeptide is Fructose-1,6-bisphosphatase class 1 (Helicobacter hepaticus (strain ATCC 51449 / 3B1)).